We begin with the raw amino-acid sequence, 142 residues long: FAD synthase (142 aa).

ATP is bound by residues 9 to 10, 14 to 17, Asp93, and Tyr120; these read VF and HLGH.

This sequence belongs to the archaeal FAD synthase family. As to quaternary structure, homodimer. The cofactor is a divalent metal cation.

The enzyme catalyses FMN + ATP + H(+) = FAD + diphosphate. The protein operates within cofactor biosynthesis; FAD biosynthesis; FAD from FMN: step 1/1. In terms of biological role, catalyzes the transfer of the AMP portion of ATP to flavin mononucleotide (FMN) to produce flavin adenine dinucleotide (FAD) coenzyme. The protein is FAD synthase of Thermoplasma acidophilum (strain ATCC 25905 / DSM 1728 / JCM 9062 / NBRC 15155 / AMRC-C165).